A 230-amino-acid polypeptide reads, in one-letter code: Sugar fermentation stimulation protein homolog (230 aa).

It belongs to the SfsA family.

This is Sugar fermentation stimulation protein homolog from Pyrococcus furiosus (strain ATCC 43587 / DSM 3638 / JCM 8422 / Vc1).